The following is a 440-amino-acid chain: Chromosome partition protein MukF (440 aa).

Positions 208–236 (LSETSGTLRELQDTLEAAGDKLQANLLRI) are leucine-zipper.

The protein belongs to the MukF family. In terms of assembly, interacts, and probably forms a ternary complex, with MukE and MukB via its C-terminal region. The complex formation is stimulated by calcium or magnesium. It is required for an interaction between MukE and MukB.

The protein resides in the cytoplasm. The protein localises to the nucleoid. Its function is as follows. Involved in chromosome condensation, segregation and cell cycle progression. May participate in facilitating chromosome segregation by condensation DNA from both sides of a centrally located replisome during cell division. Not required for mini-F plasmid partitioning. Probably acts via its interaction with MukB and MukE. Overexpression results in anucleate cells. It has a calcium binding activity. The chain is Chromosome partition protein MukF from Escherichia coli O127:H6 (strain E2348/69 / EPEC).